The sequence spans 424 residues: Probable ribonuclease FAU-1 (424 aa).

It belongs to the FAU-1 family.

Probable RNase involved in rRNA stability through maturation and/or degradation of precursor rRNAs. Binds to RNA in loop regions with AU-rich sequences. The polypeptide is Probable ribonuclease FAU-1 (Saccharolobus solfataricus (strain ATCC 35092 / DSM 1617 / JCM 11322 / P2) (Sulfolobus solfataricus)).